The chain runs to 418 residues: Perilipin-1 homolog (418 aa).

The interval 211 to 275 is required for lipid droplet localization; that stretch reads LTIGQRVKNL…EKKTWVIEKS (65 aa).

Belongs to the perilipin family. As to expression, expressed in intestinal and epidermal cells. Expressed in the muscle and hypodermis.

It is found in the lipid droplet. Functionally, lipid droplet-associated protein which plays a role in lipid droplet clustering. The polypeptide is Perilipin-1 homolog (Caenorhabditis elegans).